A 225-amino-acid polypeptide reads, in one-letter code: C-type lectin domain-containing protein 91 (225 aa).

A signal peptide spans 1-21; that stretch reads MRSTYILIIVPLIIIGGGVVA. The C-type lectin domain occupies 85-215; the sequence is YSDSCYFIET…CTMAFKSICE (131 aa). Cystine bridges form between Cys-106–Cys-214 and Cys-185–Cys-206. N-linked (GlcNAc...) asparagine glycosylation occurs at Asn-217.

It localises to the secreted. The protein is C-type lectin domain-containing protein 91 (clec-91) of Caenorhabditis elegans.